The chain runs to 476 residues: Adenosylhomocysteinase (476 aa).

T67, D142, and E202 together coordinate substrate. 203–205 (TTT) serves as a coordination point for NAD(+). Substrate is bound by residues K232 and D236. NAD(+) contacts are provided by residues N237, 266–271 (GYGDVG), E289, N324, 345–347 (IGH), and N390.

Belongs to the adenosylhomocysteinase family. NAD(+) serves as cofactor.

Its subcellular location is the cytoplasm. The catalysed reaction is S-adenosyl-L-homocysteine + H2O = L-homocysteine + adenosine. Its pathway is amino-acid biosynthesis; L-homocysteine biosynthesis; L-homocysteine from S-adenosyl-L-homocysteine: step 1/1. May play a key role in the regulation of the intracellular concentration of adenosylhomocysteine. This Synechococcus sp. (strain CC9902) protein is Adenosylhomocysteinase.